The following is a 1201-amino-acid chain: Coatomer subunit alpha (1201 aa).

WD repeat units lie at residues S9–D39, D51–S81, G93–N123, G135–D165, G207–R237, and G251–D281. Positions A842 to D862 are disordered. Over residues E848 to D862 the composition is skewed to acidic residues.

Oligomeric complex that consists of at least the alpha, beta, beta', gamma, delta, epsilon and zeta subunits. Interacts with the ESCRT-0 subunit VPS27. Interacts with KEI1 (via C-terminal region).

Its subcellular location is the cytoplasm. The protein localises to the golgi apparatus membrane. It is found in the cytoplasmic vesicle. The protein resides in the COPI-coated vesicle membrane. Its function is as follows. The coatomer is a cytosolic protein complex that binds to dilysine motifs and reversibly associates with Golgi non-clathrin-coated vesicles, which further mediate biosynthetic protein transport from the ER, via the Golgi up to the trans Golgi network. Coatomer complex is required for budding from Golgi membranes, and is essential for the retrograde Golgi-to-ER transport of dilysine-tagged proteins. This is Coatomer subunit alpha (COP1) from Saccharomyces cerevisiae (strain ATCC 204508 / S288c) (Baker's yeast).